The sequence spans 169 residues: Putative hydrogenase maturation protease MJ0631 (169 aa).

It belongs to the peptidase A31 family.

The sequence is that of Putative hydrogenase maturation protease MJ0631 from Methanocaldococcus jannaschii (strain ATCC 43067 / DSM 2661 / JAL-1 / JCM 10045 / NBRC 100440) (Methanococcus jannaschii).